Here is a 186-residue protein sequence, read N- to C-terminus: C-type lectin 37Da (186 aa).

An N-terminal signal peptide occupies residues 1 to 20 (MLKTLVQLFLVVAGFAPGFG). Residues Asn-35 and Asn-47 are each glycosylated (N-linked (GlcNAc...) asparagine). The C-type lectin domain occupies 46 to 169 (INESYYVFGQ…CHNHASSLFK (124 aa)). Cys-140 and Cys-160 are joined by a disulfide.

The protein localises to the secreted. Its function is as follows. Galactose-specific lectin that displays calcium-dependent activity. Binds to the surface of hemocytes and enhances hemocyte encapsulation and melanization. This is likely by interacting with carbohydrates on the surface of the hemocytes. Also displays agglutination activity against the Gram-negative bacterium E.coli. The protein is C-type lectin 37Da of Drosophila melanogaster (Fruit fly).